The primary structure comprises 286 residues: tRNA (guanine-N(7)-)-methyltransferase (286 aa).

S-adenosyl-L-methionine-binding residues include E91, E116, N143, and D165. D165 is an active-site residue. Residues K169, D201, and 262–265 contribute to the substrate site; that span reads TNFE.

The protein belongs to the class I-like SAM-binding methyltransferase superfamily. TrmB family.

It carries out the reaction guanosine(46) in tRNA + S-adenosyl-L-methionine = N(7)-methylguanosine(46) in tRNA + S-adenosyl-L-homocysteine. Its pathway is tRNA modification; N(7)-methylguanine-tRNA biosynthesis. In terms of biological role, catalyzes the formation of N(7)-methylguanine at position 46 (m7G46) in tRNA. The polypeptide is tRNA (guanine-N(7)-)-methyltransferase (Bifidobacterium longum subsp. infantis (strain ATCC 15697 / DSM 20088 / JCM 1222 / NCTC 11817 / S12)).